The sequence spans 856 residues: Probable alpha,alpha-trehalose-phosphate synthase [UDP-forming] 8 (856 aa).

Phosphoserine is present on S5. T32 carries the phosphothreonine modification. Residues 57–541 (ERKIIVANML…AKSFMQDLER (485 aa)) are glycosyltransferase.

The protein in the N-terminal section; belongs to the glycosyltransferase 20 family. In the C-terminal section; belongs to the trehalose phosphatase family. Expressed in leaves, roots, stems and flowers.

The enzyme catalyses D-glucose 6-phosphate + UDP-alpha-D-glucose = alpha,alpha-trehalose 6-phosphate + UDP + H(+). The sequence is that of Probable alpha,alpha-trehalose-phosphate synthase [UDP-forming] 8 (TPS8) from Arabidopsis thaliana (Mouse-ear cress).